A 423-amino-acid chain; its full sequence is Serine--tRNA ligase (423 aa).

228 to 230 contributes to the L-serine binding site; that stretch reads TSE. ATP is bound at residue 259 to 261; the sequence is RLE. L-serine is bound at residue E282. 346–349 is an ATP binding site; that stretch reads EISS. An L-serine-binding site is contributed by S384.

This sequence belongs to the class-II aminoacyl-tRNA synthetase family. Type-1 seryl-tRNA synthetase subfamily. As to quaternary structure, homodimer. The tRNA molecule binds across the dimer.

The protein resides in the cytoplasm. The enzyme catalyses tRNA(Ser) + L-serine + ATP = L-seryl-tRNA(Ser) + AMP + diphosphate + H(+). It carries out the reaction tRNA(Sec) + L-serine + ATP = L-seryl-tRNA(Sec) + AMP + diphosphate + H(+). It functions in the pathway aminoacyl-tRNA biosynthesis; selenocysteinyl-tRNA(Sec) biosynthesis; L-seryl-tRNA(Sec) from L-serine and tRNA(Sec): step 1/1. In terms of biological role, catalyzes the attachment of serine to tRNA(Ser). Is also able to aminoacylate tRNA(Sec) with serine, to form the misacylated tRNA L-seryl-tRNA(Sec), which will be further converted into selenocysteinyl-tRNA(Sec). This is Serine--tRNA ligase from Ehrlichia canis (strain Jake).